Consider the following 187-residue polypeptide: Probable cobalt-precorrin-6B C(15)-methyltransferase (decarboxylating) (187 aa).

Residues Thr17, 41 to 45 (GCGTG), Asp62, and Gly91 contribute to the S-adenosyl-L-methionine site.

This sequence belongs to the methyltransferase superfamily. Archaeal-type CbiT family.

It catalyses the reaction Co-precorrin-6B + S-adenosyl-L-methionine = Co-precorrin-7 + S-adenosyl-L-homocysteine + CO2. It functions in the pathway cofactor biosynthesis; adenosylcobalamin biosynthesis; cob(II)yrinate a,c-diamide from sirohydrochlorin (anaerobic route): step 8/10. In terms of biological role, catalyzes the methylation of C-15 in cobalt-precorrin-6B followed by the decarboxylation of C-12 to form cobalt-precorrin-7. The chain is Probable cobalt-precorrin-6B C(15)-methyltransferase (decarboxylating) from Methanobrevibacter smithii (strain ATCC 35061 / DSM 861 / OCM 144 / PS).